The following is a 76-amino-acid chain: MAERPLDVIHKSLDKDVLVLLKRGNEFRGKLIGYDIHLNVVLADAELIQDGEVVKKYGKIVIRGDNVLALSPVELE.

Residues 4-76 (RPLDVIHKSL…VLALSPVELE (73 aa)) form the Sm domain.

The protein belongs to the snRNP Sm proteins family.

The sequence is that of Putative snRNP Sm-like protein from Thermococcus kodakarensis (strain ATCC BAA-918 / JCM 12380 / KOD1) (Pyrococcus kodakaraensis (strain KOD1)).